The following is a 351-amino-acid chain: MSKIVLDNVRKSYGGNIEVIKGVSLEIADGEFVVLVGPSGCGKSTLLRMIAGLESITSGTISIGERVVNNVEPAERDIAMVFQNYALYPHMTVRENLAYGLKNRKTPKEEIERRIAKAAKALEIEQFLERKPRQLSGGQRQRVAMGRAIVREPAAFLFDEPLSNLDAKLRVQMRVEIKRLQRSLGTTSVYVTHDQMEAMTMADRLVVLNAGHIEQVGTPIELYEKPASTFVATFIGSPSMNLLQSPESAPWQPGRAITLPSGGYTFGVRPEDIRILEEGDQDADGFNAQVRIEAVELVGAESYIHAALSDGKPLIFRVAGRSTHNIDEMVRVGASATDVHIFGADGRRVSD.

Positions 4-235 (IVLDNVRKSY…PASTFVATFI (232 aa)) constitute an ABC transporter domain. 37 to 44 (GPSGCGKS) serves as a coordination point for ATP.

This sequence belongs to the ABC transporter superfamily. sn-glycerol-3-phosphate importer (TC 3.A.1.1.3) family. In terms of assembly, the complex is composed of two ATP-binding proteins (UgpC), two transmembrane proteins (UgpA and UgpE) and a solute-binding protein (UgpB).

Its subcellular location is the cell inner membrane. The enzyme catalyses sn-glycerol 3-phosphate(out) + ATP + H2O = sn-glycerol 3-phosphate(in) + ADP + phosphate + H(+). In terms of biological role, part of the ABC transporter complex UgpBAEC involved in sn-glycerol-3-phosphate (G3P) import. Responsible for energy coupling to the transport system. This chain is sn-glycerol-3-phosphate import ATP-binding protein UgpC, found in Brucella abortus (strain 2308).